The following is a 1100-amino-acid chain: Serine/threonine/tyrosine-interacting-like protein 2 (1100 aa).

Over residues 1–12 (MASSVEDQQLQQ) the composition is skewed to polar residues. Residues 1–21 (MASSVEDQQLQQEEAESVKDV) form a disordered region. One can recognise a Tyrosine-protein phosphatase domain in the interval 141–289 (SPVDEVWPNV…LRQLNETLME (149 aa)). The segment covering 356-374 (CGSQQPNMQQPADQPSLPG) has biased composition (polar residues). Disordered stretches follow at residues 356-383 (CGSQ…EDGD), 411-436 (EDED…TSED), 479-504 (AAAR…DDVQ), 542-561 (KENA…APDL), 575-615 (KQQK…ERSR), 667-686 (VLSG…TPAP), 888-1060 (CEKP…DEEI), and 1075-1100 (VAEE…HDHK). Basic and acidic residues predominate over residues 418–428 (DKTQRAVRPDD). The span at 580-615 (HGGEENKEEILQMSRGEDTATARRRQRREEVLERSR) shows a compositional bias: basic and acidic residues. Low complexity predominate over residues 667–676 (VLSGRSTRSL). Basic and acidic residues predominate over residues 888–898 (CEKPKPKRDYG). Composition is skewed to polar residues over residues 907 to 916 (ASANNPTSSI), 994 to 1013 (SYSS…TSFA), and 1029 to 1041 (FQNH…SSVY). Positions 1089–1100 (RKQEESKSHDHK) are enriched in basic and acidic residues.

It belongs to the protein-tyrosine phosphatase family. Non-receptor class dual specificity subfamily. As to expression, expressed in muscle fibers in a regular striated pattern (at protein level).

The protein localises to the cytoplasm. The protein resides in the myofibril. It is found in the sarcomere. In terms of biological role, required for myofiber maturation. This is Serine/threonine/tyrosine-interacting-like protein 2 (styxl2) from Danio rerio (Zebrafish).